The following is a 91-amino-acid chain: Acylphosphatase (91 aa).

One can recognise an Acylphosphatase-like domain in the interval 6–91 (CMRCYISGRV…WKDYISFDVL (86 aa)). Catalysis depends on residues arginine 21 and asparagine 39.

The protein belongs to the acylphosphatase family.

It catalyses the reaction an acyl phosphate + H2O = a carboxylate + phosphate + H(+). The polypeptide is Acylphosphatase (acyP) (Legionella pneumophila (strain Paris)).